Consider the following 246-residue polypeptide: MyoD family inhibitor domain-containing protein (246 aa).

2 disordered regions span residues 1 to 93 (MSQE…EEET) and 134 to 164 (KIQS…ASPE). Residues 1–170 (MSQEREPFSP…ASPEDGCVHC (170 aa)) lie on the Extracellular side of the membrane. Over residues 63–87 (EDNSNSQPIKAQPQRLPQPNTSALE) the composition is skewed to polar residues. Positions 74–246 (QPQRLPQPNT…MECCGICFPS (173 aa)) constitute an MDFI domain. A helical membrane pass occupies residues 171–188 (ILTCLFCEFLTLCNIVVG). Over 189–246 (QASCGICTSEACCCCCTEEMGDDCNCPCDMDCGIMDACCESSDCLEICMECCGICFPS) the chain is Cytoplasmic.

This sequence belongs to the MDFI family. As to expression, expressed broadly at a low level in the early embryo.

The protein localises to the cytoplasm. It localises to the cell membrane. It is found in the secreted. In terms of biological role, required to control the activity of various transcription factors through their sequestration in the cytoplasm. Retains nuclear Zic proteins in the cytoplasm and inhibits their transcriptional activation. Required for dorsoanterior development. Necessary for siamois to activate downstream target genes, including gsc, during execution of the dorsal organizer program. Also regulates the transcriptional activity of TCF7L1/TCF3 by interacting directly with TCF7L1/TCF3 and preventing it from binding DNA. Involved in the development of lymphatic vessel valves. It is required to promote lymphatic endothelial cell migration, in a process that involves down-regulation of integrin beta 1 activation and control of cell adhesion to the extracellular matrix. The protein is MyoD family inhibitor domain-containing protein of Xenopus laevis (African clawed frog).